We begin with the raw amino-acid sequence, 444 residues long: MAGKDWEIVQEKAFTAWVNSVLDKRGEKISDVGKDLSDGVKLIFFLELISSKKFNKKYDFEPKARINMIQNVALALKFLDEELKIKVQGIGSEDFVDNNKKMILGFLWTLYRKYRIAVISEGDKSSEEGLLLWCKNTTTGYDGVNITSFTKSFRDGLAFLALSHKFEPESFKFQEFEAMDPIARLNAAFDFAEKGLGVPKLLEAEEVMRGTTDERSLVLYTSLFFHAYRAKEEKARLESSKNEMANRLAGLENSLESEKVSREQLIKQKDQLNSLLASLESEGAEREKRLRELEAKLDETLKNLELEKLARMELEARLAKTEKDRAILELKLAEAIDEKSKLEQQIEATRIRGAAEAQGLGLLRKNLDTHVHDLLKWQKLTMENSSSSSIDDQIIVEVSGLPFGEQVKHLATKLEAENLAIMKLLNQKEDDLKAQKLKSSKSKK.

Residues Met1–Ala227 form an actin-binding region. Calponin-homology (CH) domains are found at residues Ile8–Arg115 and Lys124–Arg229. 2 coiled-coil regions span residues Ala227–Arg352 and Leu410–Ala434.

Belongs to the cortexillin family. As to quaternary structure, homodimer; parallel.

The protein localises to the cytoplasm. The protein resides in the cytoskeleton. Functionally, actin-bundling protein. When linked to F-actin the actin filaments form preferentially anti-parallel bundles that associate into meshworks. Plays a major role in cytokinesis. Negatively regulates cortical localization of rapgap1. The sequence is that of Cortexillin-1 (ctxA) from Dictyostelium discoideum (Social amoeba).